The primary structure comprises 340 residues: Anthranilate phosphoribosyltransferase (340 aa).

5-phospho-alpha-D-ribose 1-diphosphate contacts are provided by residues G81, 84–85, T89, 91–94, 109–117, and S121; these read GD, NIST, and KHGNRGATS. Position 81 (G81) interacts with anthranilate. S93 provides a ligand contact to Mg(2+). N112 provides a ligand contact to anthranilate. R167 lines the anthranilate pocket. Positions 225 and 226 each coordinate Mg(2+).

Belongs to the anthranilate phosphoribosyltransferase family. As to quaternary structure, homodimer. It depends on Mg(2+) as a cofactor.

The enzyme catalyses N-(5-phospho-beta-D-ribosyl)anthranilate + diphosphate = 5-phospho-alpha-D-ribose 1-diphosphate + anthranilate. It functions in the pathway amino-acid biosynthesis; L-tryptophan biosynthesis; L-tryptophan from chorismate: step 2/5. Catalyzes the transfer of the phosphoribosyl group of 5-phosphorylribose-1-pyrophosphate (PRPP) to anthranilate to yield N-(5'-phosphoribosyl)-anthranilate (PRA). The protein is Anthranilate phosphoribosyltransferase of Methanocorpusculum labreanum (strain ATCC 43576 / DSM 4855 / Z).